Reading from the N-terminus, the 110-residue chain is Thioredoxin (110 aa).

The Thioredoxin domain occupies 3-108; that stretch reads KPIEVHDSDF…YREIFDKVLA (106 aa). A disulfide bridge connects residues Cys32 and Cys35. An N6,N6-dimethyllysine; alternate modification is found at Lys105. The residue at position 105 (Lys105) is an N6-methyllysine; alternate.

Participates in various redox reactions through the reversible oxidation of its active center dithiol to a disulfide and catalyzes dithiol-disulfide exchange reactions. In Chloroflexus aurantiacus (strain ATCC 29366 / DSM 635 / J-10-fl), this protein is Thioredoxin (trxA).